The chain runs to 233 residues: MNKILLQCDNLCKRYQEGSVQTDVLLNVSFSVGEGEMMAIVGSSGSGKSTLLHLLGGLDTPTSGDVIFNGQPMSKLSSAAKAELRNQKLGFIYQFHHLLPDFTALENVAMPLLIGKKKPAEINSCALEMLKAVGLEHRANHRPSELSGGERQRVAIARALVNNPRLVLADEPTGNLDARNADSIFQLLGELNRLQGTAFLVVTHDLQLAKRMSRQLEMRDGRLTAELSLMGAE.

One can recognise an ABC transporter domain in the interval leucine 6–glutamate 233. Position 42–49 (glycine 42–serine 49) interacts with ATP.

The protein belongs to the ABC transporter superfamily. Lipoprotein translocase (TC 3.A.1.125) family. As to quaternary structure, the complex is composed of two ATP-binding proteins (LolD) and two transmembrane proteins (LolC and LolE).

It localises to the cell inner membrane. Functionally, part of the ABC transporter complex LolCDE involved in the translocation of mature outer membrane-directed lipoproteins, from the inner membrane to the periplasmic chaperone, LolA. Responsible for the formation of the LolA-lipoprotein complex in an ATP-dependent manner. This Shigella flexneri protein is Lipoprotein-releasing system ATP-binding protein LolD.